Consider the following 189-residue polypeptide: HTH-type transcriptional repressor LfrR (189 aa).

The region spanning 12–70 (ERTRRAILDAAMLVLADHPTAALGDIAAAAGVGRSTVHRYYPERTDLLRALARHVHDLS) is the HTH tetR-type domain. Positions 33 to 52 (ALGDIAAAAGVGRSTVHRYY) form a DNA-binding region, H-T-H motif. Residues 70–71 (SN) form a proflavine binding region.

As to quaternary structure, homodimer. Forms a structurally asymmetric homodimer exhibiting local unfolding and a blocked drug-binding site.

With respect to regulation, repressor activity is regulated by binding of different substrates of the LfrA multidrug efflux pump, such as acriflavine, proflavine, ethidium bromide and rhodamine 123. Binding of these ligands causes the dissociation of LfrR from the promoter, inducing lfrA expression. Represses the transcription of the lfrRA operon by binding directly to the promoter region of lfrR-lfrA. Binds specifically to a 143-bp region upstream of the lfrR gene. The chain is HTH-type transcriptional repressor LfrR from Mycolicibacterium smegmatis (strain ATCC 700084 / mc(2)155) (Mycobacterium smegmatis).